Consider the following 164-residue polypeptide: Large ribosomal subunit protein bL9 (164 aa).

Belongs to the bacterial ribosomal protein bL9 family.

Its function is as follows. Binds to the 23S rRNA. This chain is Large ribosomal subunit protein bL9, found in Borrelia recurrentis (strain A1).